Here is a 42-residue protein sequence, read N- to C-terminus: Photosystem I reaction center subunit IX (42 aa).

The chain crosses the membrane as a helical span at residues 7-27; sequence YLSTAPVLATLWFGFLAGLLI.

This sequence belongs to the PsaJ family.

It is found in the plastid. The protein resides in the chloroplast thylakoid membrane. May help in the organization of the PsaE and PsaF subunits. This chain is Photosystem I reaction center subunit IX, found in Marchantia polymorpha (Common liverwort).